A 1104-amino-acid polypeptide reads, in one-letter code: Carbamoyl phosphate synthase large chain (1104 aa).

A carboxyphosphate synthetic domain region spans residues 1 to 402; that stretch reads MPRRTDLKSV…ALQKALRSTE (402 aa). Positions 129, 169, 175, 176, 208, 210, 215, 241, 242, 243, 285, and 299 each coordinate ATP. The ATP-grasp 1 domain occupies 133-328; sequence KGVVERCGAE…IAKIAARLAV (196 aa). Mg(2+) contacts are provided by Q285, E299, and N301. The Mn(2+) site is built by Q285, E299, and N301. The segment at 403-547 is oligomerization domain; the sequence is KRGATFSWAG…YSSYDEEDET (145 aa). The tract at residues 548-948 is carbamoyl phosphate synthetic domain; sequence RPREKAAIVI…AFGKSQTAAY (401 aa). Residues 676–867 form the ATP-grasp 2 domain; it reads GQVLERAGLV…LAKAAARLMA (192 aa). R712, R751, L753, E758, G783, I784, H785, S786, Q826, and E838 together coordinate ATP. 3 residues coordinate Mg(2+): Q826, E838, and N840. Mn(2+) is bound by residues Q826, E838, and N840. Residues 949 to 1099 form the MGS-like domain; it reads GGLPTAGTAF…QEHTARLNAA (151 aa). The tract at residues 949–1104 is allosteric domain; that stretch reads GGLPTAGTAF…RLNAAWEGRA (156 aa).

This sequence belongs to the CarB family. As to quaternary structure, composed of two chains; the small (or glutamine) chain promotes the hydrolysis of glutamine to ammonia, which is used by the large (or ammonia) chain to synthesize carbamoyl phosphate. Tetramer of heterodimers (alpha,beta)4. The cofactor is Mg(2+). Mn(2+) serves as cofactor.

It carries out the reaction hydrogencarbonate + L-glutamine + 2 ATP + H2O = carbamoyl phosphate + L-glutamate + 2 ADP + phosphate + 2 H(+). It catalyses the reaction hydrogencarbonate + NH4(+) + 2 ATP = carbamoyl phosphate + 2 ADP + phosphate + 2 H(+). Its pathway is amino-acid biosynthesis; L-arginine biosynthesis; carbamoyl phosphate from bicarbonate: step 1/1. It participates in pyrimidine metabolism; UMP biosynthesis via de novo pathway; (S)-dihydroorotate from bicarbonate: step 1/3. In terms of biological role, large subunit of the glutamine-dependent carbamoyl phosphate synthetase (CPSase). CPSase catalyzes the formation of carbamoyl phosphate from the ammonia moiety of glutamine, carbonate, and phosphate donated by ATP, constituting the first step of 2 biosynthetic pathways, one leading to arginine and/or urea and the other to pyrimidine nucleotides. The large subunit (synthetase) binds the substrates ammonia (free or transferred from glutamine from the small subunit), hydrogencarbonate and ATP and carries out an ATP-coupled ligase reaction, activating hydrogencarbonate by forming carboxy phosphate which reacts with ammonia to form carbamoyl phosphate. This is Carbamoyl phosphate synthase large chain from Kineococcus radiotolerans (strain ATCC BAA-149 / DSM 14245 / SRS30216).